Reading from the N-terminus, the 407-residue chain is Accessory Sec system protein translocase subunit SecY2 (407 aa).

10 helical membrane passes run 13–33 (FLWTLLFVFIYVLGSKLTLPF), 65–85 (FFSIGLAPWMSSILIWQMFTV), 104–124 (MLLTLAIALIQSLGLVLNLPL), 133–153 (GTIVFLDTLILIAGTYFLIWL), 158–178 (SSMGLGGSIMIVMVSMISYIP), 192–212 (PLILALIGFFSLCFLYLAVLV), 248–268 (IMYAMTLVSIPQYFLMLLLFF), 287–307 (IPWFILYLLTIFILAWAFAFI), 345–365 (FAFVGALYLVLVAGLPMLLIF), and 370–390 (YMRLGMIPGMFMIFIGMVFSI).

It belongs to the SecY/SEC61-alpha family. SecY2 subfamily. As to quaternary structure, may form heterotrimers with SecE and SecG subunits (Potential). Component of the accessory SecA2/SecY2 protein translocase complex required to export cell wall protein GspB.

Its subcellular location is the cell membrane. In terms of biological role, the central subunit of a protein translocation channel (Potential). Part of the accessory SecA2/SecY2 system specifically required to export GspB, a serine-rich repeat cell wall protein encoded upstream in the same operon. The sequence is that of Accessory Sec system protein translocase subunit SecY2 from Streptococcus gordonii.